The following is a 34-amino-acid chain: Delta-conotoxin AtVIA (34 aa).

The propeptide occupies 1–4; that stretch reads LSKK. At Q5 the chain carries Pyrrolidone carboxylic acid. 3 disulfide bridges follow: C6–C23, C13–C27, and C22–C31.

Expressed by the venom duct.

Its subcellular location is the secreted. In terms of biological role, probable toxin from a worm-hunter cone snail. Shows an excitatory activity on a majority of mouse lumbar dorsal root ganglion (DRG) neurons. Very probably inhibits the inactivation of voltage-gated sodium channels (Nav). The chain is Delta-conotoxin AtVIA from Conus ateralbus (Cone snail).